The primary structure comprises 225 residues: UPF0758 protein SEQ_1136 (225 aa).

In terms of domain architecture, MPN spans 102–224; sequence PVLSSAQVAE…YYSFREKSDL (123 aa). Positions 173, 175, and 186 each coordinate Zn(2+). The JAMM motif signature appears at 173-186; that stretch reads HNHPSGLTKPSAND.

The protein belongs to the UPF0758 family.

The sequence is that of UPF0758 protein SEQ_1136 from Streptococcus equi subsp. equi (strain 4047).